We begin with the raw amino-acid sequence, 239 residues long: Suppressor of organelle fusion 1 (239 aa).

It belongs to the WD repeat WDR91 family. Interacts with sorf-2; the interaction is direct. Interacts with bec-1.

It is found in the early endosome. The protein localises to the late endosome. The protein resides in the cytoplasm. Its function is as follows. Together with sorf-2 negatively regulates the levels of phosphatidylinositol 3-phosphate (PtdIns3P) to enable the conversion of early endosomes to late endosomes. Binds to sorf-2 and the sorf-1-sorf-2 complex likely acts through bec-1, a non-catalytic subunit of phosphatidylinositol 3-kinase (PI3K), to suppress PI3K activity, thereby negatively regulating endosomal PtdIns3P levels. This chain is Suppressor of organelle fusion 1, found in Caenorhabditis elegans.